The sequence spans 110 residues: MKLKKKFLEKSKKIAEERIDVLMNLAEKESKDGKADRSKNYVLLGKKIAMRMRMPYPKEWKRRICKNCGSFLIYGKNARVRTKAKNYPHVVITCLECNSITRIPIKTEKK.

4 residues coordinate Zn(2+): Cys-65, Cys-68, Cys-94, and Cys-97.

It belongs to the eukaryotic/archaeal RNase P protein component 4 family. Consists of a catalytic RNA component and at least 4-5 protein subunits. It depends on Zn(2+) as a cofactor.

The protein localises to the cytoplasm. It carries out the reaction Endonucleolytic cleavage of RNA, removing 5'-extranucleotides from tRNA precursor.. Functionally, part of ribonuclease P, a protein complex that generates mature tRNA molecules by cleaving their 5'-ends. The polypeptide is Ribonuclease P protein component 4 (Methanococcus maripaludis (strain C6 / ATCC BAA-1332)).